Reading from the N-terminus, the 544-residue chain is MMMTKQKNTLAERLNIGDEVRELKLGSTFNPKNTSTAFHTIKYDFKPASVDTSRMATVDVGSNNQVTVIVPNSELALNVRLLIFGLTESSGVPHTVYKGNQREYAKECLMIYDKETGAITIEKLNHNIQVKKTRTEVTNKPVQLPAQSVPMNMGHQGQVLGTNGSVPPPMAQLAQGPLSGPGGKLENSTMRVSSKDKVDFKPRNSPMQQSSPSRPVVTHRSPQSAPAWDANNAQQTLPSIPMITDDDDFGLRAAFHNGGQANISGSSTGSSSGQPDLYGSSSSSHMGKQRQAHGKRQQIHQRSSPPVQQQPHYQQQQQPNYGRAYNGASNYAQPHPQQQRHSPHQQPHQQQHQRHSPQQQQQRHSPQQLQQQRPTSYGHSNNMPMDLDSSREHDLASQSVAQAAAVLEQQIGGALSASSSSSESDSSDSDSGSDSDDSTEDDRSMKEQQEQQQQQQLQHQQIQQPAPHHQRHQQQQSQQHMNQLPNLGLGSISPSYNNHHNHQQPQPQPQQQQMSGVYASNGGFPNDLLQNDLQLSSNSSDDDD.

The interval 147 to 544 (QSVPMNMGHQ…LSSNSSDDDD (398 aa)) is disordered. A compositionally biased stretch (basic and acidic residues) spans 193 to 202 (SSKDKVDFKP). Ser205 bears the Phosphoserine mark. Positions 264–273 (SGSSTGSSSG) are enriched in low complexity. A compositionally biased stretch (basic residues) spans 287-299 (GKQRQAHGKRQQI). Composition is skewed to low complexity over residues 305 to 319 (PPVQ…QQQP), 333 to 374 (QPHP…QQRP), and 396 to 407 (ASQSVAQAAAVL). Residues 425–440 (DSSDSDSGSDSDDSTE) show a composition bias toward acidic residues. Composition is skewed to low complexity over residues 450–483 (EQQQ…HMNQ), 503–513 (QQPQPQPQQQQ), and 526–544 (NDLL…DDDD).

It belongs to the EAF family.

It localises to the nucleus. In terms of biological role, promotes transcriptional elongation by Su(Tpl)/ELL. Essential for development. The chain is Ell-associated factor Eaf from Drosophila persimilis (Fruit fly).